We begin with the raw amino-acid sequence, 202 residues long: Imidazoleglycerol-phosphate dehydratase (202 aa).

The protein belongs to the imidazoleglycerol-phosphate dehydratase family.

It localises to the cytoplasm. The enzyme catalyses D-erythro-1-(imidazol-4-yl)glycerol 3-phosphate = 3-(imidazol-4-yl)-2-oxopropyl phosphate + H2O. The protein operates within amino-acid biosynthesis; L-histidine biosynthesis; L-histidine from 5-phospho-alpha-D-ribose 1-diphosphate: step 6/9. The protein is Imidazoleglycerol-phosphate dehydratase of Salinibacter ruber (strain DSM 13855 / M31).